The chain runs to 120 residues: Adult-specific rigid cuticular protein 11.9 (120 aa).

Positions 9–87 (GGAYNFGYNT…ALAAMAPKAP (79 aa)) constitute a Chitin-binding type R&amp;R domain.

In terms of biological role, component of the rigid cuticle of the spider. The chain is Adult-specific rigid cuticular protein 11.9 from Araneus diadematus (European garden spider).